A 180-amino-acid chain; its full sequence is Insertion element IS1296 uncharacterized 21.4 kDa protein (180 aa).

The protein belongs to the IS150/IS1296 orfA family.

In Mycoplasma mycoides subsp. mycoides SC, this protein is Insertion element IS1296 uncharacterized 21.4 kDa protein.